Here is a 209-residue protein sequence, read N- to C-terminus: Regulator of G-protein signaling 1 (209 aa).

A disordered region spans residues 18–42 (FFSASPKDSKEPSHSLLDDNKQKKR). A compositionally biased stretch (basic and acidic residues) spans 24-38 (KDSKEPSHSLLDDNK). Positions 85-200 (SLEKLLANQM…LKSNIYLNLL (116 aa)) constitute an RGS domain.

In terms of assembly, interacts with GNAI1 and GNAQ. In terms of tissue distribution, expressed in multiple tissues.

It is found in the cell membrane. It localises to the cytoplasm. Its subcellular location is the cytosol. Functionally, regulates G protein-coupled receptor signaling cascades, including signaling downstream of the N-formylpeptide chemoattractant receptors and leukotriene receptors. Inhibits B cell chemotaxis toward CXCL12. Inhibits signal transduction by increasing the GTPase activity of G protein alpha subunits, thereby driving them into their inactive GDP-bound form. The sequence is that of Regulator of G-protein signaling 1 (Rgs1) from Rattus norvegicus (Rat).